We begin with the raw amino-acid sequence, 183 residues long: Neuroblastoma suppressor of tumorigenicity 1 (183 aa).

The N-terminal stretch at 1–19 is a signal peptide; the sequence is MVMCVRAVLVCVLLELSRA. Disulfide bonds link Cys-38–Cys-88, Cys-52–Cys-102, Cys-62–Cys-121, Cys-66–Cys-123, and Cys-85–Cys-126. The 90-residue stretch at 38-127 folds into the CTCK domain; it reads CEAKNITQIV…ILHCSCQSCS (90 aa). The disordered stretch occupies residues 145-170; it reads AQDLPSLPDATHTHPQHAHMQADQRD.

Belongs to the DAN family.

It is found in the secreted. In terms of biological role, may act as a tumor suppressor. This Danio rerio (Zebrafish) protein is Neuroblastoma suppressor of tumorigenicity 1 (nbl1).